The sequence spans 137 residues: MTTKCTVMAVVLAACICLQVLPQAYGRSTQGYGRMDKLLATLMGSSEGGALESASQHSLEKRQIFDPSCKGLYDRGLFSDLEHVCKDCYNLYRNPQVTSACRVNCYSNRVFRQCMEDLLLMEDFDKYARAIQTVGKK.

The signal sequence occupies residues 1 to 26 (MTTKCTVMAVVLAACICLQVLPQAYG). Residue Gln-63 is modified to Pyrrolidone carboxylic acid. 3 cysteine pairs are disulfide-bonded: Cys-69-Cys-105, Cys-85-Cys-101, and Cys-88-Cys-114. Val-134 carries the valine amide modification.

This sequence belongs to the arthropod CHH/MIH/GIH/VIH hormone family. In terms of tissue distribution, produced by the medulla terminalis X-organ in the eyestalks and transported to the sinus gland where it is stored and released.

It localises to the secreted. In terms of biological role, represses the synthesis of methyl farnesoate, the precursor of insect juvenile hormone III in the mandibular organ. Also has hyperglycemic activity. The protein is Mandibular organ-inhibiting hormone of Libinia emarginata (Portly spider crab).